The chain runs to 1370 residues: DNA-directed RNA polymerase subunit beta (1370 aa).

This sequence belongs to the RNA polymerase beta chain family. The RNAP catalytic core consists of 2 alpha, 1 beta, 1 beta' and 1 omega subunit. When a sigma factor is associated with the core the holoenzyme is formed, which can initiate transcription.

The catalysed reaction is RNA(n) + a ribonucleoside 5'-triphosphate = RNA(n+1) + diphosphate. DNA-dependent RNA polymerase catalyzes the transcription of DNA into RNA using the four ribonucleoside triphosphates as substrates. This Bordetella parapertussis (strain 12822 / ATCC BAA-587 / NCTC 13253) protein is DNA-directed RNA polymerase subunit beta.